The chain runs to 269 residues: Phosphonoacetaldehyde hydrolase (269 aa).

Catalysis depends on Asp-10, which acts as the Nucleophile. 2 residues coordinate Mg(2+): Asp-10 and Ala-12. Lys-52 (schiff-base intermediate with substrate) is an active-site residue. Mg(2+) is bound at residue Asp-186.

This sequence belongs to the HAD-like hydrolase superfamily. PhnX family. As to quaternary structure, homodimer. Mg(2+) serves as cofactor.

It carries out the reaction phosphonoacetaldehyde + H2O = acetaldehyde + phosphate + H(+). In terms of biological role, involved in phosphonate degradation. The sequence is that of Phosphonoacetaldehyde hydrolase from Klebsiella pneumoniae subsp. pneumoniae (strain ATCC 700721 / MGH 78578).